Consider the following 839-residue polypeptide: Dynein axonemal assembly factor 5 (839 aa).

11 HEAT repeats span residues 10-48 (TSDVTKALARHLNCLNDENKMIRRRALAAIQKEAADEKL), 54-92 (QHVFLELLKPLLRCLSDPMEKCRELSIQIIVYCVSHVPR), 94-137 (EEAL…VCGK), 140-178 (APYLDEMIQIFQRTMVDPFPDVKKESCKCASNYATCIPE), 181-219 (HMQAESLIKPLMQTISHQHSKVRVAVIQTTGTVIQYSSG), 221-257 (SVDDVLSHLAQRLFDDSVQVRQAVTVVVGDWLLKLQD), 259-297 (YSFFHKLIPLLLSSTTDEIPEIRKLALDYWEKIGSQWEK), 578-617 (GETLHLFVPILKMCLQPTREPQMRLKLFTMLSKLLLKASE), 675-713 (LQVEDNLMPRVITTLEEDSKMCRLMSCCIITALLSTCER), 717-755 (PDKLNKIYPELLKRLDDASDEVRVAAAKTLYQWFKCITD), and 723-761 (IYPELLKRLDDASDEVRVAAAKTLYQWFKCITDEYERTT).

It belongs to the DNAAF5 family. As to quaternary structure, interacts with DNAI2; probably involved in outer arm dynein assembly.

It localises to the cytoplasm. The protein resides in the dynein axonemal particle. Functionally, cytoplasmic protein involved in the delivery of the dynein machinery to the motile cilium. It is required for the assembly of the axonemal dynein inner and outer arms, two structures attached to the peripheral outer doublet A microtubule of the axoneme, that play a crucial role in cilium motility. The protein is Dynein axonemal assembly factor 5 of Xenopus laevis (African clawed frog).